Consider the following 200-residue polypeptide: Holliday junction branch migration complex subunit RuvA (200 aa).

Residues 1–63 (MYAYVKGKLT…EDAQLLYGFS (63 aa)) form a domain I region. A domain II region spans residues 64 to 142 (SEEEKDMFLS…ITEEDSDSLL (79 aa)). The interval 143–149 (QVDATST) is flexible linker. Residues 150 to 200 (VQDQFVQEAMLALEALGYSKRELAKVEKTLNKNKYDSVDEAVKAGLQLVVS) form a domain III region.

It belongs to the RuvA family. As to quaternary structure, homotetramer. Forms an RuvA(8)-RuvB(12)-Holliday junction (HJ) complex. HJ DNA is sandwiched between 2 RuvA tetramers; dsDNA enters through RuvA and exits via RuvB. An RuvB hexamer assembles on each DNA strand where it exits the tetramer. Each RuvB hexamer is contacted by two RuvA subunits (via domain III) on 2 adjacent RuvB subunits; this complex drives branch migration. In the full resolvosome a probable DNA-RuvA(4)-RuvB(12)-RuvC(2) complex forms which resolves the HJ.

The protein resides in the cytoplasm. Functionally, the RuvA-RuvB-RuvC complex processes Holliday junction (HJ) DNA during genetic recombination and DNA repair, while the RuvA-RuvB complex plays an important role in the rescue of blocked DNA replication forks via replication fork reversal (RFR). RuvA specifically binds to HJ cruciform DNA, conferring on it an open structure. The RuvB hexamer acts as an ATP-dependent pump, pulling dsDNA into and through the RuvAB complex. HJ branch migration allows RuvC to scan DNA until it finds its consensus sequence, where it cleaves and resolves the cruciform DNA. This Staphylococcus aureus (strain USA300) protein is Holliday junction branch migration complex subunit RuvA.